Consider the following 591-residue polypeptide: L-fucose isomerase (591 aa).

Residues E337 and D361 each act as proton acceptor in the active site. E337, D361, and H528 together coordinate Mn(2+).

Belongs to the L-fucose isomerase family. In terms of assembly, homohexamer. Requires Mn(2+) as cofactor.

Its subcellular location is the cytoplasm. It catalyses the reaction L-fucose = L-fuculose. The protein operates within carbohydrate degradation; L-fucose degradation; L-lactaldehyde and glycerone phosphate from L-fucose: step 1/3. Its function is as follows. Converts the aldose L-fucose into the corresponding ketose L-fuculose. The sequence is that of L-fucose isomerase from Escherichia coli O17:K52:H18 (strain UMN026 / ExPEC).